An 848-amino-acid polypeptide reads, in one-letter code: Trimethylamine-N-oxide reductase 1 (848 aa).

Positions Met1–Ala39 form a signal peptide, tat-type signal. Ser191 is a binding site for Mo-bis(molybdopterin guanine dinucleotide).

The protein belongs to the prokaryotic molybdopterin-containing oxidoreductase family. In terms of assembly, interacts with the N-terminal domain of TorC. Requires Mo-bis(molybdopterin guanine dinucleotide) as cofactor. Exported by the Tat system. The position of the signal peptide cleavage has been experimentally proven.

It localises to the periplasm. It carries out the reaction trimethylamine + 2 Fe(III)-[cytochrome c] + H2O = trimethylamine N-oxide + 2 Fe(II)-[cytochrome c] + 3 H(+). Its function is as follows. Reduces trimethylamine-N-oxide (TMAO) into trimethylamine; an anaerobic reaction coupled to energy-yielding reactions. In Escherichia coli (strain K12), this protein is Trimethylamine-N-oxide reductase 1 (torA).